A 494-amino-acid chain; its full sequence is Chromosomal replication initiator protein DnaA (494 aa).

The interval 1 to 103 is domain I, interacts with DnaA modulators; the sequence is MTTDPDPPFV…PVSDESDSGS (103 aa). The interval 94–117 is disordered; that stretch reads PVSDESDSGSVASPAPVAAADPDD. Residues 101-113 are compositionally biased toward low complexity; it reads SGSVASPAPVAAA. The interval 104 to 153 is domain II; that stretch reads VASPAPVAAADPDDDVVDDDLAARASAEESWPSYFTNRANRAAEDDATSV. Positions 154 to 370 are domain III, AAA+ region; it reads NLNRRYTFDT…GALIRVTAFA (217 aa). Residues G198, G200, K201, and T202 each coordinate ATP. Residues 371-494 are domain IV, binds dsDNA; it reads SLNKTPIDKS…TTRIRQRAKR (124 aa).

Belongs to the DnaA family. As to quaternary structure, oligomerizes as a right-handed, spiral filament on DNA at oriC.

It localises to the cytoplasm. In terms of biological role, plays an essential role in the initiation and regulation of chromosomal replication. ATP-DnaA binds to the origin of replication (oriC) to initiate formation of the DNA replication initiation complex once per cell cycle. Binds the DnaA box (a 9 base pair repeat at the origin) and separates the double-stranded (ds)DNA. Forms a right-handed helical filament on oriC DNA; dsDNA binds to the exterior of the filament while single-stranded (ss)DNA is stabiized in the filament's interior. The ATP-DnaA-oriC complex binds and stabilizes one strand of the AT-rich DNA unwinding element (DUE), permitting loading of DNA polymerase. After initiation quickly degrades to an ADP-DnaA complex that is not apt for DNA replication. Binds acidic phospholipids. The sequence is that of Chromosomal replication initiator protein DnaA from Mycolicibacterium vanbaalenii (strain DSM 7251 / JCM 13017 / BCRC 16820 / KCTC 9966 / NRRL B-24157 / PYR-1) (Mycobacterium vanbaalenii).